The primary structure comprises 479 residues: MPHEKQDRDAEEIEDEGKNIILGIVSQLRPNMDLSKVTFPTFVLEPKSMLERITNFMSHPDLLLNVQKTADPEMRFLDVVRFYMSGWHIRPRGVKKPLNPILGETFTGFWKFPPSNSKDPNLQKLHGIAVYAAEQVCHHPPISAYFYLCPEYKVRIDGVVKPRSRFLGNSAASIMEGIASIKLQDLDEEYLITQPNVYARGILFGKMRLELGDHVTVRCPKTDLQADIEFKVKGFISGTYNSIAGKVKRVSTGEVLYKISGKWDSEMSVESVKTGETRPLLDVSKHDVYLVSARPLEEQGERESQRLWYKTCQAVIARDQTTATETKSAIEDRQREEAKQREIENVQWKPKYFKMIAPEEYILNFDIPNGKSDLEVLCALDEFIPIFSEVDRIAFHKFLSENTKPEDSSIHKHSRDASGDSTKGFAEHMPAPARRRRPQSTASFVTYRSDNGSVDEYHDAQLPDPNTLSKLHEEQDPAL.

Ser-328, Ser-408, Ser-409, and Ser-421 each carry phosphoserine. The segment covering 404 to 418 has biased composition (basic and acidic residues); that stretch reads KPEDSSIHKHSRDAS. The interval 404–479 is disordered; that stretch reads KPEDSSIHKH…KLHEEQDPAL (76 aa). Positions 439–452 are enriched in polar residues; the sequence is QSTASFVTYRSDNG. The segment covering 470-479 has biased composition (basic and acidic residues); it reads KLHEEQDPAL.

This sequence belongs to the OSBP family.

It is found in the cytoplasm. Its subcellular location is the nucleus. The sequence is that of Oxysterol-binding protein homolog C23B6.01c from Schizosaccharomyces pombe (strain 972 / ATCC 24843) (Fission yeast).